A 201-amino-acid chain; its full sequence is Small ribosomal subunit protein uS4c (201 aa).

The interval G20–Q43 is disordered. Positions M89 to N150 constitute an S4 RNA-binding domain.

This sequence belongs to the universal ribosomal protein uS4 family. Part of the 30S ribosomal subunit. Contacts protein S5. The interaction surface between S4 and S5 is involved in control of translational fidelity.

The protein resides in the plastid. Its subcellular location is the chloroplast. In terms of biological role, one of the primary rRNA binding proteins, it binds directly to 16S rRNA where it nucleates assembly of the body of the 30S subunit. Its function is as follows. With S5 and S12 plays an important role in translational accuracy. This chain is Small ribosomal subunit protein uS4c (rps4), found in Populus alba (White poplar).